A 269-amino-acid chain; its full sequence is Zinc transporter ZupT (269 aa).

The next 8 helical transmembrane spans lie at 11–31 (IALAVTLAAGLATAIGSLLVL), 40–60 (LLAFGLAFAGGAMVYVSLSEI), 80–100 (YGTLAFLLGVIVIVLIDHFIP), 125–145 (ALLTSIAITAHNFPEGLATFF), 158–178 (AFAIAIHNIPEGIAIAVPVYF), 187–207 (FSASLLSGLAEPVGAALGYWL), 217–237 (FGWVFGLIAGVMVFLALDELL), and 249–269 (TVYGLVAGMGTLAISLVLFKW). Residues N136 and E139 each contribute to the Fe(2+) site. The Zn(2+) site is built by E139 and H164. Fe(2+) contacts are provided by N165, E168, and E197. E168 serves as a coordination point for Zn(2+).

This sequence belongs to the ZIP transporter (TC 2.A.5) family. ZupT subfamily.

The protein localises to the cell inner membrane. The catalysed reaction is Zn(2+)(in) = Zn(2+)(out). In terms of biological role, mediates zinc uptake. May also transport other divalent cations. This is Zinc transporter ZupT from Stenotrophomonas maltophilia (strain R551-3).